A 106-amino-acid polypeptide reads, in one-letter code: ATP-dependent Clp protease adapter protein ClpS (106 aa).

It belongs to the ClpS family. Binds to the N-terminal domain of the chaperone ClpA.

Functionally, involved in the modulation of the specificity of the ClpAP-mediated ATP-dependent protein degradation. The chain is ATP-dependent Clp protease adapter protein ClpS from Serratia proteamaculans (strain 568).